The primary structure comprises 187 residues: Accessory gene regulator protein B (187 aa).

A run of 5 helical transmembrane segments spans residues 49 to 69, 82 to 102, 106 to 126, 144 to 164, and 166 to 186; these read ISIF…YMLI, ILCY…LINI, FTYL…YAPA, VSII…PFYA, and FMLL…FPKE.

It belongs to the AgrB family.

The protein resides in the cell membrane. Essential for the production of a quorum sensing system signal molecule, the autoinducing peptide (AIP). This quorum sensing system is responsible for the regulation of the expression of virulence factor genes. Involved in the proteolytic processing of AgrD, the precursor of AIP. This chain is Accessory gene regulator protein B, found in Staphylococcus aureus (strain bovine RF122 / ET3-1).